The following is a 407-amino-acid chain: Elongation factor Tu (407 aa).

Positions 10–217 (KPHVNVGTIG…TLDEYIPEPE (208 aa)) constitute a tr-type G domain. A G1 region spans residues 19–26 (GHVDHGKT). Residue 19 to 26 (GHVDHGKT) coordinates GTP. Residue Thr26 participates in Mg(2+) binding. A G2 region spans residues 60–64 (GITIA). Positions 81–84 (DCPG) are G3. Residues 81-85 (DCPGH) and 136-139 (NKAD) contribute to the GTP site. Residues 136–139 (NKAD) form a G4 region. Residues 184–186 (SAL) are G5.

This sequence belongs to the TRAFAC class translation factor GTPase superfamily. Classic translation factor GTPase family. EF-Tu/EF-1A subfamily. As to quaternary structure, monomer.

Its subcellular location is the cytoplasm. The enzyme catalyses GTP + H2O = GDP + phosphate + H(+). In terms of biological role, GTP hydrolase that promotes the GTP-dependent binding of aminoacyl-tRNA to the A-site of ribosomes during protein biosynthesis. The polypeptide is Elongation factor Tu (Teredinibacter turnerae (strain ATCC 39867 / T7901)).